A 412-amino-acid polypeptide reads, in one-letter code: Cytochrome p450 CYP199A2 (412 aa).

Substrate contacts are provided by residues 94 to 97 (RPPS) and Ser-247. Cys-361 is a heme binding site.

Belongs to the cytochrome P450 family. Interacts with the ferredoxin-like iron-sulfur protein ThcC. Heme serves as cofactor.

Its subcellular location is the cytoplasm. It carries out the reaction 4-methoxybenzoate + AH2 + O2 = 4-hydroxybenzoate + formaldehyde + A + H2O. Functionally, the oxidative demethylation of 4-methoxybenzoate requires the participation of the monooxygenase CYP199A2, the ferredoxin-like protein ThcC/RPA1872 and a ferredoxin reductase to mediate the transfer of electrons from NADH to CYP199A2. It is also active with 4-ethylbenzoate. The polypeptide is Cytochrome p450 CYP199A2 (Rhodopseudomonas palustris (strain ATCC BAA-98 / CGA009)).